Consider the following 375-residue polypeptide: Alcohol dehydrogenase 6 (375 aa).

Ser-23 is subject to Phosphoserine. Positions 47, 69, 99, 102, 105, 113, and 175 each coordinate Zn(2+). NAD(+) is bound by residues 200-205 (GLGGVG), Asp-224, Lys-229, 293-295 (VGL), and Arg-370.

The protein belongs to the zinc-containing alcohol dehydrogenase family. Class-V subfamily. In terms of assembly, dimer. Zn(2+) serves as cofactor.

The protein localises to the cytoplasm. It carries out the reaction a primary alcohol + NAD(+) = an aldehyde + NADH + H(+). It catalyses the reaction a secondary alcohol + NAD(+) = a ketone + NADH + H(+). Functionally, alcohol dehydrogenase. Catalyzes the NAD-dependent oxidation of primary alcohols to the corresponding aldehydes. Oxidizes secondary alcohols to the corresponding ketones. In Pongo abelii (Sumatran orangutan), this protein is Alcohol dehydrogenase 6 (ADH6).